The chain runs to 564 residues: Efflux pump DEP3 (564 aa).

Positions 1–12 (MVYSSTSSSQNR) are enriched in polar residues. The segment at 1–48 (MVYSSTSSSQNRPDGEKHVEAVGSSTRIPSDELVDRGGGDTTTGKQSP) is disordered. Basic and acidic residues predominate over residues 29–38 (PSDELVDRGG). The next 14 helical transmembrane spans lie at 65–85 (STTL…PAII), 91–111 (LELL…ILLW), 122–142 (WVYI…GAAP), 152–172 (VIAG…VSVL), 185–205 (STVV…AFAA), 212–232 (WGFY…FLLF), 255–275 (AVIF…GGVV), 281–301 (GTVI…IVLL), 332–352 (FLSS…FQFI), 362–382 (VRLL…GFLM), 386–406 (GLIP…TALM), 423–443 (ILIG…VQSL), 452–472 (AVGA…AISG), and 528–548 (TIWA…FPLL).

Belongs to the major facilitator superfamily. TCR/Tet family.

The protein resides in the cell membrane. Functionally, efflux pump; part of the gene cluster that mediates the biosynthesis of depudecin, a highly oxidized eleven-carbon linear polyketide that acts as a histone deacetylase (HDAC) inhibitor and makes a small contribution to pathogenesis. Is presumed either to be responsible for exporting depudecin, to provide self-protection, or both. The protein is Efflux pump DEP3 of Alternaria brassicicola (Dark leaf spot agent).